We begin with the raw amino-acid sequence, 89 residues long: Heat shock protein 30A (89 aa).

Composition is skewed to basic and acidic residues over residues 1–11 (MRNNVERRMQR) and 19–39 (LSKD…RESE). Residues 1–55 (MRNNVERRMQRVNEACRLLSKDTEMRRITDQNRQSRESEGTSPNSGKDGKDHFEL) are disordered. Positions 35–89 (SRESEGTSPNSGKDGKDHFELTLNVRDFSPHELTVKTQGRRVIVTGKHERKSDTE) constitute a sHSP domain.

It belongs to the small heat shock protein (HSP20) family.

The protein is Heat shock protein 30A (hsp30a) of Xenopus laevis (African clawed frog).